We begin with the raw amino-acid sequence, 251 residues long: Large ribosomal subunit protein uL3 (251 aa).

Disordered regions lie at residues 140–162 and 229–251; these read SHRS…NKKM and AAPA…EENA. An N5-methylglutamine modification is found at Q151.

The protein belongs to the universal ribosomal protein uL3 family. As to quaternary structure, part of the 50S ribosomal subunit. Forms a cluster with proteins L14 and L19. Methylated by PrmB.

Its function is as follows. One of the primary rRNA binding proteins, it binds directly near the 3'-end of the 23S rRNA, where it nucleates assembly of the 50S subunit. The protein is Large ribosomal subunit protein uL3 of Methylobacterium nodulans (strain LMG 21967 / CNCM I-2342 / ORS 2060).